Reading from the N-terminus, the 414-residue chain is Serine/arginine-rich splicing factor SR45 (414 aa).

Disordered regions lie at residues 1-95 (MAKP…KAVQ) and 175-414 (LPPR…PRKT). Low complexity-rich tracts occupy residues 10–34 (SPSV…SRSI) and 42–60 (RSLS…GSRS). The Nuclear localization signal 1 motif lies at 62-69 (PRRGKSPA). At Ser-77 the chain carries Phosphoserine. In terms of domain architecture, RRM spans 98-176 (LVLHVDSLSR…KVVKATFTLP (79 aa)). Residues 176–191 (PPRQKVSSPPKPVSAA) are compositionally biased toward low complexity. The span at 205-220 (DAEKDGGPRRPRETSP) shows a compositional bias: basic and acidic residues. The required for isoform 1 function in petal development stretch occupies residues 218-219 (TS). Over residues 228–243 (PRRRSPLPRRGLSPRR) the composition is skewed to basic residues. A Nuclear localization signal 2 motif is present at residues 229–236 (RRRSPLPR). Ser-256 is subject to Phosphoserine. 3 short sequence motifs (nuclear localization signal) span residues 284-291 (PRRYRSPP), 318-325 (PRRLRSPP), and 338-345 (IRRPGRSR). 2 stretches are compositionally biased toward basic residues: residues 285–343 (RRYR…RPGR) and 352–363 (RKGRGPAGRRGR). Positions 364-373 (SSSYSSSPSP) are enriched in low complexity. The Nuclear localization signal 6 motif lies at 373–380 (PRRIPRKI). A compositionally biased stretch (basic residues) spans 375 to 394 (RIPRKISRSRSPKRPLRGKR). Residues 404–414 (SPPPPPPPRKT) are compositionally biased toward pro residues.

This sequence belongs to the splicing factor SR family. SR45 subfamily. Component of the spliceosome. Interacts with AFC2, U2AF35A, U2AF35B, RNU1, SCL33 and SKIP. The interaction with AFC2 depends on phosphorylation status. Interaction with RNU1 defines initial 5' splice sites and interaction with U2AF35B 3' splice sites in the early stage of spliceosome assembly. Phosphorylated by AFC2. The phosphorylation status regulates intranuclear distribution. As to expression, especially present in actively growing regions and dividing cells. Mostly expressed in roots (primary and secondary root meristem), shoot apical meristem (SAM), leaf primordia, pollen and inflorescence, and, to a lower extent, in leaves, vascular tissue, hydathode and fruits.

It localises to the nucleus speckle. Its subcellular location is the nucleus. The protein localises to the nucleoplasm. Functionally, involved in 5' and 3' splicing site selection of introns, and may bridge the 5' and 3' components of the spliceosome. Isoform 1 is required during flower petal development and isoform 2 is involved in root growth. Negatively regulates glucose and abscisic acid (ABA) signaling during early seedling development. Involved in the RNA-directed DNA methylation pathway. Modulates KIN10 stability in response to sugars, probably through the splicing regulation of 5PTASE13, a protein implicated in the proteasomal degradation of KIN10. The sequence is that of Serine/arginine-rich splicing factor SR45 from Arabidopsis thaliana (Mouse-ear cress).